A 451-amino-acid chain; its full sequence is G-protein coupled receptor 61 (451 aa).

Over residues 1–14 the composition is skewed to low complexity; sequence MESSPIPQSSGNSS. The disordered stretch occupies residues 1–31; that stretch reads MESSPIPQSSGNSSTLGRVPQTPGPSTASGV. Topologically, residues 1 to 44 are extracellular; that stretch reads MESSPIPQSSGNSSTLGRVPQTPGPSTASGVPEVGLRDVASESV. A glycan (N-linked (GlcNAc...) asparagine) is linked at Asn12. The chain crosses the membrane as a helical span at residues 45-67; sequence ALFFMLLLDLTAVAGNAAVMAVI. The Cytoplasmic segment spans residues 68–75; that stretch reads AKTPALRK. A helical membrane pass occupies residues 76 to 98; that stretch reads FVFVFHLCLVDLLAALTLMPLAM. The Extracellular portion of the chain corresponds to 99–112; it reads LSSSALFDHALFGE. The helical transmembrane segment at 113-135 threads the bilayer; sequence VACRLYLFLSVCFVSLAILSVSA. Over 136–155 the chain is Cytoplasmic; that stretch reads INVERYYYVVHPMRYEVRMT. A helical membrane pass occupies residues 156–178; it reads LGLVASVLVGVWVKALAMASVPV. At 179-206 the chain is on the extracellular side; it reads LGRVSWEEGAPSVPPGCSLQWSHSAYCQ. Residues 207–229 traverse the membrane as a helical segment; sequence LFVVVFAVLYFLLPLLLILVVYC. Residues 230 to 287 lie on the Cytoplasmic side of the membrane; it reads SMFRVARVAAMQHGPLPTWMETPRQRSESLSSRSTMVTSSGAPQTTPHRTFGGGKAAV. Residues 288 to 310 form a helical membrane-spanning segment; sequence VLLAVGGQFLLCWLPYFSFHLYV. Residues 311-324 are Extracellular-facing; sequence ALSAQPISTGQVES. Residues 325 to 344 form a helical membrane-spanning segment; that stretch reads VVTWIGYFCFTSNPFFYGCL. Residues 345-451 lie on the Cytoplasmic side of the membrane; that stretch reads NRQIRGELSK…RPAASPRLES (107 aa).

This sequence belongs to the G-protein coupled receptor 1 family. In terms of assembly, forms heterodimer with MTNR1B. Interacts with ARRB1 and ARRB2 in a spontaneous and agonist-independent manner; leading to the internalization of GPR61 in the endosomal compartment. Expressed in brain; detected in frontal and temporal lobes, occipital pole, amygdala and hippocampus. Also expressed in testis and T cells, B cells, and monocyte. Low expression in many other tissues. Widely expressed in the hippocampus (at protein level).

It is found in the cell membrane. The protein localises to the endosome membrane. Functionally, orphan G-protein coupled receptor. Constitutively activates the G(s)-alpha/cAMP signaling pathway. Shows a reciprocal regulatory interaction with the melatonin receptor MTNR1B most likely through receptor heteromerization. May be involved in the regulation of food intake and body weight. This is G-protein coupled receptor 61 (GPR61) from Homo sapiens (Human).